A 313-amino-acid chain; its full sequence is Probable lysophospholipase L2 (313 aa).

The protein localises to the cell inner membrane. It catalyses the reaction a 1-acyl-sn-glycero-3-phosphocholine + H2O = sn-glycerol 3-phosphocholine + a fatty acid + H(+). The sequence is that of Probable lysophospholipase L2 (pldB) from Haemophilus influenzae (strain ATCC 51907 / DSM 11121 / KW20 / Rd).